Here is a 137-residue protein sequence, read N- to C-terminus: Small ribosomal subunit protein uS19 (137 aa).

Belongs to the universal ribosomal protein uS19 family.

In terms of biological role, protein S19 forms a complex with S13 that binds strongly to the 16S ribosomal RNA. The sequence is that of Small ribosomal subunit protein uS19 from Methanoculleus marisnigri (strain ATCC 35101 / DSM 1498 / JR1).